We begin with the raw amino-acid sequence, 483 residues long: Trimethylamine methyltransferase MttB (483 aa).

A non-standard amino acid (pyrrolysine) is located at residue Pyl334.

It belongs to the trimethylamine methyltransferase family. Can form a complex with MttC.

It catalyses the reaction Co(I)-[trimethylamine-specific corrinoid protein] + trimethylamine + H(+) = methyl-Co(III)-[trimethylamine-specific corrinoid protein] + dimethylamine. The protein operates within one-carbon metabolism; methanogenesis from trimethylamine. Its function is as follows. Catalyzes the transfer of a methyl group from trimethylamine to the corrinoid cofactor of MttC. The sequence is that of Trimethylamine methyltransferase MttB (mttB) from Methanosarcina thermophila.